The primary structure comprises 716 residues: Interleukin-31 receptor subunit alpha (716 aa).

A signal peptide spans 1–18 (MWTLALWAFSFLCKFSLA). Over 19–499 (VLPTKPENIS…TNGVRINFKT (481 aa)) the chain is Extracellular. Fibronectin type-III domains follow at residues 23–115 (KPEN…IAKT), 117–211 (PPII…TMEE), 213–304 (PHVL…ILRI), 305–403 (PDVH…QAYA), and 408–502 (PLKG…TLSI). Asn-36, Asn-48, and Asn-64 each carry an N-linked (GlcNAc...) asparagine glycan. Asn-382 carries N-linked (GlcNAc...) asparagine glycosylation. The helical transmembrane segment at 500 to 520 (LSISVFEIVLLTSLVGGGLLL) threads the bilayer. Topologically, residues 521–716 (LSIKTVTFGL…NIPEHSKGEV (196 aa)) are cytoplasmic. Disordered regions lie at residues 622–641 (EYVT…FKEP) and 648–696 (ASED…LKNS). Residues 670 to 679 (QPSSSCQSPG) are compositionally biased toward polar residues.

This sequence belongs to the type I cytokine receptor family. Type 2 subfamily. As to quaternary structure, heterodimer with OSMR. Interacts with JAK1 and STAT3. In terms of processing, N-glycosylated. As to expression, expressed in a subset of dorsal root ganglia neurons. Expressed in spinal cord and trigeminal ganglion (at protein level). Expressed in skin, testis, bone marrow and thymus.

It localises to the cell membrane. The protein resides in the presynaptic cell membrane. Its subcellular location is the cell projection. The protein localises to the axon. Associates with OSMR to form the interleukin-31 receptor which activates STAT3 and to a lower extent STAT1 and STAT5. May function in skin immunity. Mediates IL31-induced itch, probably in a manner dependent on cation channels TRPA1 and TRPV1. Positively regulates numbers and cycling status of immature subsets of myeloid progenitor cells in bone marrow in vivo and enhances myeloid progenitor cell survival in vitro. The polypeptide is Interleukin-31 receptor subunit alpha (Il31ra) (Mus musculus (Mouse)).